The chain runs to 705 residues: Variediene synthase (705 aa).

The tract at residues 9 to 331 is terpene cyclase; sequence LNSTLSSVVE…RCPRYHPWLC (323 aa). Residue aspartate 100 coordinates Mg(2+). Residues aspartate 100, 186-189, asparagine 230, 234-238, and 325-326 each bind substrate; these read RIID, SFDIE, and RY. Residues 100–104 carry the DDXXD 1 motif; it reads DNVVE. The short motif at 230 to 238 is the NSE/DTE element; that stretch reads NDYFSFDIE. The tract at residues 332-705 is prenyltransferase; it reads KEAASLLHQD…VRLLIHRLKV (374 aa). Residues 349-366 are compositionally biased toward basic and acidic residues; the sequence is GRKPQALEEYRSRSHSES. The segment at 349 to 374 is disordered; that stretch reads GRKPQALEEYRSRSHSESDLSDASPT. Positions 424, 427, and 456 each coordinate isopentenyl diphosphate. Mg(2+) contacts are provided by aspartate 463 and aspartate 467. The DDXXD 2 signature appears at 463-467; that stretch reads DDIED. Arginine 472 provides a ligand contact to dimethylallyl diphosphate. Arginine 473 contacts isopentenyl diphosphate. Positions 550, 551, 589, 596, 605, and 615 each coordinate dimethylallyl diphosphate.

This sequence in the N-terminal section; belongs to the terpene synthase family. In the C-terminal section; belongs to the FPP/GGPP synthase family. In terms of assembly, hexamer. It depends on Mg(2+) as a cofactor.

It carries out the reaction isopentenyl diphosphate + (2E,6E)-farnesyl diphosphate = (2E,6E,10E)-geranylgeranyl diphosphate + diphosphate. The catalysed reaction is isopentenyl diphosphate + (2E,6E,10E)-geranylgeranyl diphosphate = (2E,6E,10E,14E)-geranylfarnesyl diphosphate + diphosphate. It catalyses the reaction (2E,6E,10E)-geranylgeranyl diphosphate = variediene + diphosphate. The enzyme catalyses (2E,6E,10E,14E)-geranylfarnesyl diphosphate = (R,2E)-alpha-cericerene + diphosphate. The protein operates within secondary metabolite biosynthesis; terpenoid biosynthesis. Its function is as follows. Bifunctional terpene synthase that converts dimethylallyl diphosphate (DMAPP) and isopentenyl diphosphate (IPP) into variediene as a single product. The C-terminal prenyltransferase (PT) domain of EvVS catalyzes formation of geranylgeranyl pyrophosphate (GGPP), whereas the N-terminal terpene cyclase (TC) domain catalyzes the cyclization of GGPP to variediene. The PT domain can also synthesize geranylfarnesyl pyrophosphate (GFPP) from the C5 isoprene units in vitro, while the TC domain is able to cyclize GFPP to the sesterterpene (2E)-alpha-cericerene. This is Variediene synthase from Emericella variicolor (Aspergillus stellatus).